Reading from the N-terminus, the 217-residue chain is MARRPDEEYDYLFKVVLIGDSGVGKSNLLSRFTRNEFCLESKSTIGVEFATRTLQVEGRTVKAQIWDTAGQERYRAITSAYYRGALGALLVYDVTKPTTFENVSRWLKELRDHADSNIVIMLIGNKTDLKHLRAVATEDAQSYAEKEGLSFIETSALEALNVEKAFQTILSEVYRIISKKSISSDQTTANANIKEGQTIDVAATSESNAKKPCCSSS.

19-26 lines the GTP pocket; that stretch reads GDSGVGKS. The Effector region motif lies at 41-49; sequence SKSTIGVEF. GTP-binding positions include 67 to 71, 125 to 128, and 155 to 156; these read DTAGQ, NKTD, and SA. A lipid anchor (S-palmitoyl cysteine) is attached at Cys-213. Cysteine methyl ester is present on Cys-214. A lipid anchor (S-geranylgeranyl cysteine) is attached at Cys-214. The propeptide at 215–217 is removed in mature form; the sequence is SSS.

The protein belongs to the small GTPase superfamily. Rab family. As to expression, expressed in root tips.

It is found in the endosome membrane. The protein resides in the golgi apparatus. The protein localises to the trans-Golgi network membrane. Functionally, intracellular vesicle trafficking and protein transport. In Arabidopsis thaliana (Mouse-ear cress), this protein is Ras-related protein RABA2a (RABA2A).